A 121-amino-acid polypeptide reads, in one-letter code: Large ribosomal subunit protein bL19 (121 aa).

It belongs to the bacterial ribosomal protein bL19 family.

In terms of biological role, this protein is located at the 30S-50S ribosomal subunit interface and may play a role in the structure and function of the aminoacyl-tRNA binding site. The protein is Large ribosomal subunit protein bL19 of Amoebophilus asiaticus (strain 5a2).